Here is a 364-residue protein sequence, read N- to C-terminus: UDP-arabinopyranose mutase 1 (364 aa).

Positions 110-112 match the DXD motif motif; it reads DDD. Arg158 is a glycosylation site (N-linked (Glc...) arginine).

It belongs to the RGP family. As to quaternary structure, heteromers with UAM2 and UAM3. It depends on Mn(2+) as a cofactor. Mg(2+) serves as cofactor. In terms of processing, reversibly glycosylated in vitro at Arg-158 by UDP-glucose. Reversibly glycosylated by UDP-xylose and UDP-galactose.

The protein resides in the golgi apparatus. The enzyme catalyses UDP-beta-L-arabinofuranose = UDP-beta-L-arabinopyranose. In terms of biological role, UDP-L-arabinose mutase involved in the biosynthesis of cell wall non-cellulosic polysaccharides. Catalyzes the interconvertion of UDP-L-arabinopyranose (UDP-Arap) and UDP-L-arabinofuranose (UDP-Araf). Preferentially catalyzes the formation of UDP-Arap from UDP-Araf. At thermodynamic equilibrium in vitro the ratio of the pyranose form over the furanose form is 90:10. Is probably active as heteromer in vivo. This is UDP-arabinopyranose mutase 1 from Oryza sativa subsp. japonica (Rice).